The primary structure comprises 89 residues: Small ribosomal subunit protein uS15 (89 aa).

The protein belongs to the universal ribosomal protein uS15 family. In terms of assembly, part of the 30S ribosomal subunit. Forms a bridge to the 50S subunit in the 70S ribosome, contacting the 23S rRNA.

In terms of biological role, one of the primary rRNA binding proteins, it binds directly to 16S rRNA where it helps nucleate assembly of the platform of the 30S subunit by binding and bridging several RNA helices of the 16S rRNA. Forms an intersubunit bridge (bridge B4) with the 23S rRNA of the 50S subunit in the ribosome. In Acinetobacter baumannii (strain AB307-0294), this protein is Small ribosomal subunit protein uS15.